The following is a 449-amino-acid chain: MSITPPFLLACIDLRGAELTATQLRATLPRGGADVEAVLPTVWPIVQAVAECGADAALEFGALFDGVRPPTVRVPDAALDAALAGLDPDVRDALQVMIERTRVVHADQRRTDVTTALGPGATVTERWVPVERVGLYVPGGNAVYPSSVVMNVVPAQTAGVDSLVVASPPQFTSGGRFHGLPHPTILAAARLLGVDEVWAVGGAQAVALLAYGGTDSDDCELAPVDMITGPGNIYVTAAKRLCRSRVGIDGEAGPTEIAILADHTADPAHVAADMISQAEHDEMAASVLVTPSTDLADATDAELAAQLRTTVHRKRVVAALGGRQSAIILVDDLEAGVKVVNLYAAEHLEIQTAEASRVASRIRCAGAIFVGPWAPVSLGDYCAGSNHVLPTAGFARHSGGLSVQTFLRGIHVVNYTKTALKDISGHVITLAKAEDLPAHGEAVRRRFAR.

Residues Y136, Q204, and N232 each coordinate NAD(+). Positions 255, 277, and 280 each coordinate substrate. Zn(2+)-binding residues include Q277 and H280. Residues E346 and H347 each act as proton acceptor in the active site. Substrate contacts are provided by H347, D380, E434, and H439. D380 lines the Zn(2+) pocket. H439 is a Zn(2+) binding site.

It belongs to the histidinol dehydrogenase family. It depends on Zn(2+) as a cofactor.

It carries out the reaction L-histidinol + 2 NAD(+) + H2O = L-histidine + 2 NADH + 3 H(+). Its pathway is amino-acid biosynthesis; L-histidine biosynthesis; L-histidine from 5-phospho-alpha-D-ribose 1-diphosphate: step 9/9. Its function is as follows. Catalyzes the sequential NAD-dependent oxidations of L-histidinol to L-histidinaldehyde and then to L-histidine. The sequence is that of Histidinol dehydrogenase (hisD) from Mycobacterium leprae (strain TN).